Consider the following 157-residue polypeptide: SsrA-binding protein (157 aa).

The disordered stretch occupies residues 132 to 157; that stretch reads VHDKRQAQKDKDWAREKDRLFKKAYK. Residues 135-157 show a composition bias toward basic and acidic residues; sequence KRQAQKDKDWAREKDRLFKKAYK.

This sequence belongs to the SmpB family.

It localises to the cytoplasm. In terms of biological role, required for rescue of stalled ribosomes mediated by trans-translation. Binds to transfer-messenger RNA (tmRNA), required for stable association of tmRNA with ribosomes. tmRNA and SmpB together mimic tRNA shape, replacing the anticodon stem-loop with SmpB. tmRNA is encoded by the ssrA gene; the 2 termini fold to resemble tRNA(Ala) and it encodes a 'tag peptide', a short internal open reading frame. During trans-translation Ala-aminoacylated tmRNA acts like a tRNA, entering the A-site of stalled ribosomes, displacing the stalled mRNA. The ribosome then switches to translate the ORF on the tmRNA; the nascent peptide is terminated with the 'tag peptide' encoded by the tmRNA and targeted for degradation. The ribosome is freed to recommence translation, which seems to be the essential function of trans-translation. This is SsrA-binding protein from Francisella tularensis subsp. novicida (strain U112).